A 473-amino-acid chain; its full sequence is Argininosuccinate lyase (473 aa).

It belongs to the lyase 1 family. Argininosuccinate lyase subfamily.

The protein resides in the cytoplasm. It carries out the reaction 2-(N(omega)-L-arginino)succinate = fumarate + L-arginine. It functions in the pathway amino-acid biosynthesis; L-arginine biosynthesis; L-arginine from L-ornithine and carbamoyl phosphate: step 3/3. The polypeptide is Argininosuccinate lyase (Nocardia farcinica (strain IFM 10152)).